A 329-amino-acid polypeptide reads, in one-letter code: Sulfate-binding protein (329 aa).

The first 19 residues, 1–19 (MKKWGVGFTLLLASTSILA), serve as a signal peptide directing secretion.

Belongs to the prokaryotic sulfate-binding protein family.

The protein localises to the periplasm. This protein specifically binds sulfate and is involved in its transmembrane transport. The sequence is that of Sulfate-binding protein (sbp) from Salmonella typhimurium (strain LT2 / SGSC1412 / ATCC 700720).